Reading from the N-terminus, the 269-residue chain is Shikimate dehydrogenase (NADP(+)) (269 aa).

Shikimate-binding positions include serine 13–serine 15 and threonine 60. Catalysis depends on lysine 64, which acts as the Proton acceptor. Glutamate 76 provides a ligand contact to NADP(+). Positions 85 and 100 each coordinate shikimate. NADP(+) is bound by residues glycine 124 to alanine 128, asparagine 148 to arginine 153, and isoleucine 209. Tyrosine 211 is a shikimate binding site. Glycine 232 provides a ligand contact to NADP(+). Residue glutamine 239 coordinates shikimate.

It belongs to the shikimate dehydrogenase family. In terms of assembly, monomer or homodimer.

It catalyses the reaction shikimate + NADP(+) = 3-dehydroshikimate + NADPH + H(+). It participates in metabolic intermediate biosynthesis; chorismate biosynthesis; chorismate from D-erythrose 4-phosphate and phosphoenolpyruvate: step 4/7. Its function is as follows. Involved in the biosynthesis of the chorismate, which leads to the biosynthesis of aromatic amino acids. Catalyzes the reversible NADPH linked reduction of 3-dehydroshikimate (DHSA) to yield shikimate (SA). It can also use NAD to oxidize shikimate. The sequence is that of Shikimate dehydrogenase (NADP(+)) from Staphylococcus epidermidis (strain ATCC 35984 / DSM 28319 / BCRC 17069 / CCUG 31568 / BM 3577 / RP62A).